The primary structure comprises 179 residues: Large ribosomal subunit protein uL10 (179 aa).

This sequence belongs to the universal ribosomal protein uL10 family. In terms of assembly, part of the ribosomal stalk of the 50S ribosomal subunit. The N-terminus interacts with L11 and the large rRNA to form the base of the stalk. The C-terminus forms an elongated spine to which L12 dimers bind in a sequential fashion forming a multimeric L10(L12)X complex.

In terms of biological role, forms part of the ribosomal stalk, playing a central role in the interaction of the ribosome with GTP-bound translation factors. In Mycolicibacterium gilvum (strain PYR-GCK) (Mycobacterium gilvum (strain PYR-GCK)), this protein is Large ribosomal subunit protein uL10.